A 173-amino-acid polypeptide reads, in one-letter code: Myosin light chain 5 (173 aa).

The interval 1 to 22 (MASRKTKKKEGGGLRAQRASSN) is disordered. EF-hand domains follow at residues 30-65 (TQIQEFKEAFTLMDQNRDGFIDKEDLKDTYASLGKT), 100-135 (DAEETILNAFKMLDPEGKGSINKDYIKRLLMSQADK), and 136-171 (MTAEEVDQMFQFATIDAAGNLDYKALSYVLTHGEEK). Ca(2+) is bound by residues Asp43, Asn45, Asp47, and Asp54.

In terms of assembly, myosin is a hexamer of 2 heavy chains and 4 light chains. Jaw-closing muscles.

The sequence is that of Myosin light chain 5 (MYL5) from Felis catus (Cat).